Here is a 1501-residue protein sequence, read N- to C-terminus: RE1-silencing transcription factor A (1501 aa).

A C2H2-type 1 zinc finger spans residues 158-180 (FRCKPCQYKAESEEEFVHHIKIH). Residues 186-200 (VDNDSKKNPQGKEAD) show a composition bias toward basic and acidic residues. A disordered region spans residues 186–209 (VDNDSKKNPQGKEADSSIPEESDI). C2H2-type zinc fingers lie at residues 214–236 (IQCDGCGYNTNRFDHYLAHLKHH), 246–268 (YKCTICTYSTVSEYHWKKHLRNH), 274–296 (YTCSQCSYFSDRKNNYIQHIRTH), 302–324 (YQCIICLYSSSQKTHLTRHMRTH), 330–353 (FKCEQCSYVASNQHEVTRHARQVH), 359–381 (LTCPHCDYKTADRSNFKKHVELH), and 387–410 (FLCPVCDYAASKKCNLQYHIKSRH). Disordered stretches follow at residues 491-514 (SSTQKKIKASEVRPEKIVDKSRKS), 569-612 (SFVK…SVAS), 885-929 (PTKV…VPGD), and 1040-1079 (VAAGDEPTSVQPLSREDPKSVQPIGEDQPTSVQPPGGDEQ). Basic and acidic residues-rich tracts occupy residues 498–512 (KASEVRPEKIVDKSR) and 594–605 (ITEKKEKGKQLD). The span at 1067–1079 (QPTSVQPPGGDEQ) shows a compositional bias: polar residues. Residues 1463 to 1485 (FVCIFCDRTFRKEEEYTKHLRRH) form a C2H2-type 9 zinc finger.

It localises to the nucleus. The protein localises to the cytoplasm. Transcriptional repressor which binds neuron-restrictive silencer element (NRSE) and represses neuronal gene transcription in non-neuronal cells. Plays a role in the early development of the nervous system and is required for proper patterning of the neuroectoderm during gastrulation. This involves the correct speciation of the neuroepithelial domain and adequate development of the non-neural ectoderm. In Xenopus laevis (African clawed frog), this protein is RE1-silencing transcription factor A (rest-a).